The following is a 220-amino-acid chain: uncharacterized protein (220 aa).

The interval 1–50 (MTDDVRDVNTETTDATEVAEIDSAAGEAGDSATEAFDTDSATESTAQKGQ) is disordered. Positions 39–48 (DSATESTAQK) are enriched in polar residues. The chain crosses the membrane as a helical span at residues 65-85 (VPVILILLMLISGGATGWLYL).

It to M.tuberculosis Rv1363c.

The protein resides in the membrane. This is an uncharacterized protein from Mycobacterium tuberculosis (strain CDC 1551 / Oshkosh).